Consider the following 321-residue polypeptide: ATP-dependent 6-phosphofructokinase (321 aa).

ATP is bound at residue glycine 12. ADP contacts are provided by residues 22-26 (RAVVR) and 55-60 (RYSVSD). ATP is bound by residues 73–74 (RF) and 103–106 (GDGS). Aspartate 104 is a Mg(2+) binding site. 127-129 (TID) serves as a coordination point for substrate. The Proton acceptor role is filled by aspartate 129. Arginine 156 provides a ligand contact to ADP. Substrate contacts are provided by residues arginine 164 and 171-173 (MGR). Residues 187-189 (GCE) and 215-217 (KRH) contribute to the ADP site. Residues glutamate 224, arginine 245, and 251–254 (HVQR) each bind substrate.

This sequence belongs to the phosphofructokinase type A (PFKA) family. ATP-dependent PFK group I subfamily. Prokaryotic clade 'B1' sub-subfamily. Homotetramer. Requires Mg(2+) as cofactor.

The protein resides in the cytoplasm. It carries out the reaction beta-D-fructose 6-phosphate + ATP = beta-D-fructose 1,6-bisphosphate + ADP + H(+). The protein operates within carbohydrate degradation; glycolysis; D-glyceraldehyde 3-phosphate and glycerone phosphate from D-glucose: step 3/4. With respect to regulation, allosterically activated by ADP and other diphosphonucleosides, and allosterically inhibited by phosphoenolpyruvate. Its function is as follows. Catalyzes the phosphorylation of D-fructose 6-phosphate to fructose 1,6-bisphosphate by ATP, the first committing step of glycolysis. The sequence is that of ATP-dependent 6-phosphofructokinase from Actinobacillus succinogenes (strain ATCC 55618 / DSM 22257 / CCUG 43843 / 130Z).